The chain runs to 136 residues: Large ribosomal subunit protein uL16 (136 aa).

Belongs to the universal ribosomal protein uL16 family. In terms of assembly, part of the 50S ribosomal subunit.

Its function is as follows. Binds 23S rRNA and is also seen to make contacts with the A and possibly P site tRNAs. In Shewanella piezotolerans (strain WP3 / JCM 13877), this protein is Large ribosomal subunit protein uL16.